Reading from the N-terminus, the 416-residue chain is Serine hydroxymethyltransferase (416 aa).

Residues Leu-118 and 122-124 contribute to the (6S)-5,6,7,8-tetrahydrofolate site; that span reads GHL. Lys-226 is modified (N6-(pyridoxal phosphate)lysine). (6S)-5,6,7,8-tetrahydrofolate is bound by residues Glu-242 and 350–352; that span reads SPF.

This sequence belongs to the SHMT family. As to quaternary structure, homodimer. Requires pyridoxal 5'-phosphate as cofactor.

The protein localises to the cytoplasm. It catalyses the reaction (6R)-5,10-methylene-5,6,7,8-tetrahydrofolate + glycine + H2O = (6S)-5,6,7,8-tetrahydrofolate + L-serine. The protein operates within one-carbon metabolism; tetrahydrofolate interconversion. It functions in the pathway amino-acid biosynthesis; glycine biosynthesis; glycine from L-serine: step 1/1. Catalyzes the reversible interconversion of serine and glycine with tetrahydrofolate (THF) serving as the one-carbon carrier. This reaction serves as the major source of one-carbon groups required for the biosynthesis of purines, thymidylate, methionine, and other important biomolecules. Also exhibits THF-independent aldolase activity toward beta-hydroxyamino acids, producing glycine and aldehydes, via a retro-aldol mechanism. The sequence is that of Serine hydroxymethyltransferase from Helicobacter hepaticus (strain ATCC 51449 / 3B1).